The following is a 586-amino-acid chain: Aspartate--tRNA(Asp/Asn) ligase (586 aa).

Residue Glu176 participates in L-aspartate binding. An aspartate region spans residues 200 to 203; the sequence is QIFK. Arg222 is a binding site for L-aspartate. ATP contacts are provided by residues 222 to 224 and Gln231; that span reads RDE. Residue His449 coordinates L-aspartate. Glu483 is a binding site for ATP. Residue Arg490 participates in L-aspartate binding. Residue 535 to 538 coordinates ATP; the sequence is GIDR.

The protein belongs to the class-II aminoacyl-tRNA synthetase family. Type 1 subfamily. Homodimer.

It is found in the cytoplasm. It catalyses the reaction tRNA(Asx) + L-aspartate + ATP = L-aspartyl-tRNA(Asx) + AMP + diphosphate. Its function is as follows. Aspartyl-tRNA synthetase with relaxed tRNA specificity since it is able to aspartylate not only its cognate tRNA(Asp) but also tRNA(Asn). Reaction proceeds in two steps: L-aspartate is first activated by ATP to form Asp-AMP and then transferred to the acceptor end of tRNA(Asp/Asn). The chain is Aspartate--tRNA(Asp/Asn) ligase from Brachyspira hyodysenteriae (strain ATCC 49526 / WA1).